The sequence spans 410 residues: Eukaryotic initiation factor 4A (410 aa).

The short motif at 37 to 65 (ESFDSMGLQENLLRGIYAYGFEKPSAIQQ) is the Q motif element. Residues 68–238 (IVPFCKGLDV…RKFMNKPVRI (171 aa)) form the Helicase ATP-binding domain. ATP is bound at residue 81–88 (AQSGTGKT). A DEAD box motif is present at residues 186–189 (DEAD). A Helicase C-terminal domain is found at 249–410 (GIKQFYVNID…ELPANVADLL (162 aa)).

It belongs to the DEAD box helicase family. eIF4A subfamily. EIF4F is a multi-subunit complex, the composition of which varies with external and internal environmental conditions. It is composed of at least EIF4A, EIF4E and EIF4G.

The enzyme catalyses ATP + H2O = ADP + phosphate + H(+). ATP-dependent RNA helicase which is a subunit of the eIF4F complex involved in cap recognition and is required for mRNA binding to ribosome. In the current model of translation initiation, eIF4A unwinds RNA secondary structures in the 5'-UTR of mRNAs which is necessary to allow efficient binding of the small ribosomal subunit, and subsequent scanning for the initiator codon. The protein is Eukaryotic initiation factor 4A of Zea mays (Maize).